A 463-amino-acid polypeptide reads, in one-letter code: Sugar transporter ERD6-like 7 (463 aa).

A run of 12 helical transmembrane segments spans residues 26-46 (WMVYLSTFVAVCGSFAFGSCA), 69-89 (LFGSLLTFGAMIGAITSGPIA), 103-123 (AFCVVGWLAIIFAKGVVALDL), 126-146 (LATGYGMGAFSYVVPIFIAEI), 157-177 (TLNQILICTGVSVSFIIGTLV), 181-201 (VLALIGIIPCAASFLGLFFIP), 264-284 (VLIAFGLMVFQQFGGINGICF), 299-319 (LGMIIYAVLQVVITALNAPIV), 327-347 (LLLVSATGLVIGCLIAAVSFY), 357-377 (AVPVLAVVGIMVYIGSFSAGM), 396-416 (VAGGMATLVNWFGAWAVSYTF), and 426-446 (GTFLIYAAINALAIVFVIAIV).

This sequence belongs to the major facilitator superfamily. Sugar transporter (TC 2.A.1.1) family.

The protein localises to the membrane. Its function is as follows. Sugar transporter. In Arabidopsis thaliana (Mouse-ear cress), this protein is Sugar transporter ERD6-like 7.